A 101-amino-acid polypeptide reads, in one-letter code: Small ribosomal subunit protein uS14 (101 aa).

This sequence belongs to the universal ribosomal protein uS14 family. In terms of assembly, part of the 30S ribosomal subunit. Contacts proteins S3 and S10.

In terms of biological role, binds 16S rRNA, required for the assembly of 30S particles and may also be responsible for determining the conformation of the 16S rRNA at the A site. The polypeptide is Small ribosomal subunit protein uS14 (Xylella fastidiosa (strain 9a5c)).